The sequence spans 346 residues: 3-isopropylmalate dehydrogenase (346 aa).

76 to 87 contributes to the NAD(+) binding site; it reads GPQWTDPNNRPE. Residues R94, R104, R132, and D217 each coordinate substrate. Residues D217, D241, and D245 each contribute to the Mg(2+) site. NAD(+) is bound at residue 275–287; the sequence is GSAPDIANQNLAN.

It belongs to the isocitrate and isopropylmalate dehydrogenases family. LeuB type 1 subfamily. Homodimer. It depends on Mg(2+) as a cofactor. The cofactor is Mn(2+).

It is found in the cytoplasm. It carries out the reaction (2R,3S)-3-isopropylmalate + NAD(+) = 4-methyl-2-oxopentanoate + CO2 + NADH. It participates in amino-acid biosynthesis; L-leucine biosynthesis; L-leucine from 3-methyl-2-oxobutanoate: step 3/4. Functionally, catalyzes the oxidation of 3-carboxy-2-hydroxy-4-methylpentanoate (3-isopropylmalate) to 3-carboxy-4-methyl-2-oxopentanoate. The product decarboxylates to 4-methyl-2 oxopentanoate. The chain is 3-isopropylmalate dehydrogenase from Staphylococcus haemolyticus (strain JCSC1435).